A 36-amino-acid chain; its full sequence is Photosystem I reaction center subunit VIII (36 aa).

Residues P7 to Y29 traverse the membrane as a helical segment.

It belongs to the PsaI family.

It localises to the plastid. Its subcellular location is the chloroplast thylakoid membrane. Its function is as follows. May help in the organization of the PsaL subunit. The sequence is that of Photosystem I reaction center subunit VIII from Anthoceros angustus (Hornwort).